Reading from the N-terminus, the 159-residue chain is 3-hydroxyacyl-[acyl-carrier-protein] dehydratase FabZ (159 aa).

His-62 is a catalytic residue.

Belongs to the thioester dehydratase family. FabZ subfamily.

It is found in the cytoplasm. The catalysed reaction is a (3R)-hydroxyacyl-[ACP] = a (2E)-enoyl-[ACP] + H2O. Functionally, involved in unsaturated fatty acids biosynthesis. Catalyzes the dehydration of short chain beta-hydroxyacyl-ACPs and long chain saturated and unsaturated beta-hydroxyacyl-ACPs. This chain is 3-hydroxyacyl-[acyl-carrier-protein] dehydratase FabZ, found in Methylobacterium nodulans (strain LMG 21967 / CNCM I-2342 / ORS 2060).